The sequence spans 179 residues: Transcription factor 21 (179 aa).

A disordered region spans residues 23-87 (IKLDPNKEFG…QVQRNAANAR (65 aa)). Residues 34-46 (SNDSNEESSTCDN) are compositionally biased toward polar residues. The segment covering 50–64 (KKGRGTSGKRRKAPS) has biased composition (basic residues). Positions 70–80 (GNINQEGKQVQ) are enriched in polar residues. The region spanning 79–131 (VQRNAANARERARMRVLSKAFSRLKTTLPWVPPDTKLSKLDTLRLASSYIAHL) is the bHLH domain.

Efficient DNA binding requires dimerization with another bHLH protein.

It localises to the nucleus. Its function is as follows. Involved in epithelial-mesenchymal interactions in kidney and lung morphogenesis that include epithelial differentiation and branching morphogenesis. The polypeptide is Transcription factor 21 (tcf21) (Xenopus tropicalis (Western clawed frog)).